The primary structure comprises 166 residues: ATP synthase subunit b (166 aa).

The chain crosses the membrane as a helical span at residues 27 to 47; the sequence is FFVVLLIFLIVLGVIAKWVVP. The segment at 124-143 is disordered; sequence SADQQLSQQGSAAQSELQSS.

It belongs to the ATPase B chain family. In terms of assembly, F-type ATPases have 2 components, F(1) - the catalytic core - and F(0) - the membrane proton channel. F(1) has five subunits: alpha(3), beta(3), gamma(1), delta(1), epsilon(1). F(0) has three main subunits: a(1), b(2) and c(10-14). The alpha and beta chains form an alternating ring which encloses part of the gamma chain. F(1) is attached to F(0) by a central stalk formed by the gamma and epsilon chains, while a peripheral stalk is formed by the delta and b chains.

Its subcellular location is the cell membrane. F(1)F(0) ATP synthase produces ATP from ADP in the presence of a proton or sodium gradient. F-type ATPases consist of two structural domains, F(1) containing the extramembraneous catalytic core and F(0) containing the membrane proton channel, linked together by a central stalk and a peripheral stalk. During catalysis, ATP synthesis in the catalytic domain of F(1) is coupled via a rotary mechanism of the central stalk subunits to proton translocation. Its function is as follows. Component of the F(0) channel, it forms part of the peripheral stalk, linking F(1) to F(0). The chain is ATP synthase subunit b from Mycolicibacterium vanbaalenii (strain DSM 7251 / JCM 13017 / BCRC 16820 / KCTC 9966 / NRRL B-24157 / PYR-1) (Mycobacterium vanbaalenii).